The following is a 397-amino-acid chain: DNA-directed RNA polymerase subunit Rpo1C (397 aa).

This sequence belongs to the RNA polymerase beta' chain family. In terms of assembly, part of the RNA polymerase complex.

The protein localises to the cytoplasm. It carries out the reaction RNA(n) + a ribonucleoside 5'-triphosphate = RNA(n+1) + diphosphate. DNA-dependent RNA polymerase (RNAP) catalyzes the transcription of DNA into RNA using the four ribonucleoside triphosphates as substrates. Forms part of the jaw domain. This chain is DNA-directed RNA polymerase subunit Rpo1C, found in Methanococcus aeolicus (strain ATCC BAA-1280 / DSM 17508 / OCM 812 / Nankai-3).